A 127-amino-acid polypeptide reads, in one-letter code: Large ribosomal subunit protein bL12 (127 aa).

The protein belongs to the bacterial ribosomal protein bL12 family. Homodimer. Part of the ribosomal stalk of the 50S ribosomal subunit. Forms a multimeric L10(L12)X complex, where L10 forms an elongated spine to which 2 to 4 L12 dimers bind in a sequential fashion. Binds GTP-bound translation factors.

Its function is as follows. Forms part of the ribosomal stalk which helps the ribosome interact with GTP-bound translation factors. Is thus essential for accurate translation. The chain is Large ribosomal subunit protein bL12 from Clavibacter michiganensis subsp. michiganensis (strain NCPPB 382).